Reading from the N-terminus, the 83-residue chain is Beta-defensin 119 (83 aa).

An N-terminal signal peptide occupies residues 1–20; it reads MKFLFLFLAILLAMEPVVSG. Cystine bridges form between Cys27/Cys54, Cys34/Cys48, and Cys38/Cys55.

Belongs to the beta-defensin family.

It is found in the secreted. In terms of biological role, has antibacterial activity. This chain is Beta-defensin 119 (DEFB119), found in Bos taurus (Bovine).